Here is an 80-residue protein sequence, read N- to C-terminus: Raniseptin-1 (80 aa).

The N-terminal stretch at 1 to 22 (MAFLKKSLFLVLFLGIVSLSIC) is a signal peptide. A propeptide spanning residues 23–49 (EEEKREGEEEEKQEEENEELSEEELRE) is cleaved from the precursor.

This sequence belongs to the frog skin active peptide (FSAP) family. Dermaseptin subfamily. As to expression, expressed by the skin glands.

The protein localises to the secreted. Functionally, has antibacterial activity against the Gram-negative bacteria E.coli ATCC 25922 (MIC=5 uM), P.aeruginosa ATCC 27853 (MIC=10 uM) and X.citri (MIC&lt; 2 uM), and the Gram-positive bacterium S.aureus ATCC 29313 (MIC=20 uM). Does not have hemolytic activity against human erythrocytes. This chain is Raniseptin-1, found in Boana raniceps (Chaco tree frog).